The primary structure comprises 200 residues: 3-isopropylmalate dehydratase small subunit (200 aa).

Belongs to the LeuD family. LeuD type 1 subfamily. In terms of assembly, heterodimer of LeuC and LeuD.

The enzyme catalyses (2R,3S)-3-isopropylmalate = (2S)-2-isopropylmalate. It participates in amino-acid biosynthesis; L-leucine biosynthesis; L-leucine from 3-methyl-2-oxobutanoate: step 2/4. In terms of biological role, catalyzes the isomerization between 2-isopropylmalate and 3-isopropylmalate, via the formation of 2-isopropylmaleate. This Yersinia pseudotuberculosis serotype O:1b (strain IP 31758) protein is 3-isopropylmalate dehydratase small subunit.